We begin with the raw amino-acid sequence, 301 residues long: MEPNELKRALGAGLLSFPVTPFDDKGEFNPDVYGAHIDWLSGYDATVLFAAGGTGEMFSLSPDEIPNIVATAKAASNGVPIVGGCGGGTRVAVEIAKGIEKAGGDGILLLPQYLIDAPQAGLYAHVKAVCDAVGFGVTVYNRDNCVLQTETIQRLADDCPNLIGFKDGTGELGLVRRITATLGDRLTYIGGMPTAELFAEAYLGAGFSTYSSAVFNFVPQLACDFYKALRAGDRATCENILNRFFFPFMDLRSRQKGYAVAAIKAGVRLQGFAAGSVRPPLTDLTSQEVDILAGLIEPWKQ.

It belongs to the DapA family.

It carries out the reaction 5-dehydro-4-deoxy-D-glucarate + H(+) = 2,5-dioxopentanoate + CO2 + H2O. Its pathway is carbohydrate acid metabolism; D-glucarate degradation; 2,5-dioxopentanoate from D-glucarate: step 2/2. The polypeptide is Probable 5-dehydro-4-deoxyglucarate dehydratase (Allorhizobium ampelinum (strain ATCC BAA-846 / DSM 112012 / S4) (Agrobacterium vitis (strain S4))).